A 2092-amino-acid polypeptide reads, in one-letter code: RNA-directed RNA polymerase L (2092 aa).

The endonuclease stretch occupies residues 18–215 (VPIKHFDCTM…ELSSTDEELG (198 aa)). Mn(2+) contacts are provided by His79, Asp111, and Glu125. The active-site For endonuclease activity is Lys143. The 192-residue stretch at 975-1166 (ARKQCKGPVW…AICFRMKKEL (192 aa)) folds into the RdRp catalytic domain. Residue Asp1134 coordinates Mg(2+). The segment at 1706 to 1822 (GAGTVGGFIK…PFGCPVYIIK (117 aa)) is cap-binding.

The protein belongs to the Bunyavirales RNA polymerase family. Homomultimer. Interacts with glycoprotein N; this interaction allows efficient polymerase packaging into virus particles. Interacts with nucleoprotein N. It depends on Mn(2+) as a cofactor. Mg(2+) serves as cofactor.

It is found in the host Golgi apparatus. The protein resides in the host endoplasmic reticulum. It localises to the host endoplasmic reticulum-Golgi intermediate compartment. Its subcellular location is the virion. It catalyses the reaction RNA(n) + a ribonucleoside 5'-triphosphate = RNA(n+1) + diphosphate. In terms of biological role, RNA-dependent RNA polymerase, which is responsible for the replication and transcription of the viral RNA genome using antigenomic RNA as an intermediate. During transcription, synthesizes subgenomic RNAs and assures their capping by a cap-snatching mechanism, which involves the endonuclease activity cleaving the host capped pre-mRNAs. These short capped RNAs are then used as primers for viral transcription. The 3'-end of subgenomic mRNAs molecules are not polyadenylated. During replication, the polymerase binds the 5' and 3' vRNA extremities at distinct sites. In turn, significant conformational changes occur in the polymerase and in vRNA to initiate active RNA synthesis. As a consequence of the use of the same enzyme for both transcription and replication, these mechanisms need to be well coordinated. This chain is RNA-directed RNA polymerase L, found in Aedes (Bovine).